A 507-amino-acid polypeptide reads, in one-letter code: Probable aldehyde dehydrogenase (507 aa).

Gly-219 to Gly-225 contacts NAD(+). Active-site residues include Glu-263 and Cys-302.

This sequence belongs to the aldehyde dehydrogenase family.

It carries out the reaction an aldehyde + NAD(+) + H2O = a carboxylate + NADH + 2 H(+). The protein is Probable aldehyde dehydrogenase of Mycobacterium bovis (strain ATCC BAA-935 / AF2122/97).